Here is a 427-residue protein sequence, read N- to C-terminus: Acetyl-CoA acetyltransferase, mitochondrial (427 aa).

Residues 1–33 (MAVLAALLRGGARSRSPLLRRLVQEIRYVERSY) constitute a mitochondrion transit peptide. Residue K66 is modified to N6-acetyllysine; alternate. K66 carries the N6-succinyllysine; alternate modification. An N6-succinyllysine modification is found at K78. C126 acts as the Acyl-thioester intermediate in catalysis. N6-acetyllysine; alternate is present on residues K174, K181, K190, and K202. 4 positions are modified to N6-succinyllysine; alternate: K174, K181, K190, and K202. Y219 contributes to the CoA binding site. Y219 lines the K(+) pocket. An N6-acetyllysine; alternate mark is found at K223 and K230. K223 and K230 each carry N6-succinyllysine; alternate. K243 is subject to N6-succinyllysine. 2 positions are modified to N6-acetyllysine: K251 and K257. CoA contacts are provided by residues 258–260 (RVD) and K263. K263 carries the N6-acetyllysine; alternate modification. K263 carries the N6-succinyllysine; alternate modification. K266 and K268 each carry N6-succinyllysine. K273 is subject to N6-acetyllysine. 3 residues coordinate K(+): A280, A281, and A283. S284 is a binding site for CoA. N6-acetyllysine is present on K338. Residue V381 coordinates K(+). C413 serves as the catalytic Proton donor/acceptor.

Belongs to the thiolase-like superfamily. Thiolase family. Homotetramer. In terms of processing, succinylation at Lys-268, adjacent to a coenzyme A binding site. Desuccinylated by SIRT5.

It is found in the mitochondrion. It catalyses the reaction 2 acetyl-CoA = acetoacetyl-CoA + CoA. The enzyme catalyses propanoyl-CoA + acetyl-CoA = 2-methyl-3-oxobutanoyl-CoA + CoA. It participates in lipid metabolism; fatty acid beta-oxidation. With respect to regulation, activated by potassium ions, but not sodium ions. In terms of biological role, this is one of the enzymes that catalyzes the last step of the mitochondrial beta-oxidation pathway, an aerobic process breaking down fatty acids into acetyl-CoA. Using free coenzyme A/CoA, catalyzes the thiolytic cleavage of medium- to long-chain 3-oxoacyl-CoAs into acetyl-CoA and a fatty acyl-CoA shortened by two carbon atoms. The activity of the enzyme is reversible and it can also catalyze the condensation of two acetyl-CoA molecules into acetoacetyl-CoA. Thereby, it plays a major role in ketone body metabolism. This is Acetyl-CoA acetyltransferase, mitochondrial (ACAT1) from Macaca fascicularis (Crab-eating macaque).